The primary structure comprises 634 residues: Microtubule-associated protein 70-2 (634 aa).

The segment at 1–57 (MSDVSGDGDLSATVTEHEVTPQPPVSSATYPSLTVSASYKESSGGKSSSKRRPIRPS) is disordered. Residues 25 to 35 (VSSATYPSLTV) show a composition bias toward polar residues. A compositionally biased stretch (low complexity) spans 36–47 (SASYKESSGGKS). Positions 74 to 392 (DPVKVELNRL…LRLKVLEETL (319 aa)) form a coiled coil. The tract at residues 258-494 (ILDRMHRQKV…YSFNKATDDS (237 aa)) is required for targeting to microtubules. Composition is skewed to polar residues over residues 393 to 417 (RGTS…SRRQ) and 443 to 464 (MRHS…TSKS). 2 disordered regions span residues 393-526 (RGTS…SVPG) and 594-634 (VEKD…KSTQ). The stretch at 532-601 (LQKEVVSLRK…MRVEKDQDAR (70 aa)) forms a coiled coil. Residues 605-616 (FSNSKSPSNTAQ) are compositionally biased toward polar residues.

Belongs to the MAP70 family.

It is found in the cytoplasm. The protein localises to the cytoskeleton. In terms of biological role, plant-specific protein that interact with microtubules. This chain is Microtubule-associated protein 70-2 (MAP70.2), found in Arabidopsis thaliana (Mouse-ear cress).